The chain runs to 372 residues: Chaperone protein DnaJ (372 aa).

The 66-residue stretch at 5–70 (DYYDLLEVSR…EKRAGYDRYG (66 aa)) folds into the J domain. The segment at 134 to 212 (GIQAPIHYVT…CGGSGRKRDE (79 aa)) adopts a CR-type zinc-finger fold. Zn(2+)-binding residues include cysteine 147, cysteine 150, cysteine 164, cysteine 167, cysteine 186, cysteine 189, cysteine 200, and cysteine 203. CXXCXGXG motif repeat units follow at residues 147 to 154 (CNTCQGTG), 164 to 171 (CNTCQGSG), 186 to 193 (CTTCYGEG), and 200 to 207 (CKKCGGSG).

The protein belongs to the DnaJ family. In terms of assembly, homodimer. Zn(2+) is required as a cofactor.

Its subcellular location is the cytoplasm. Functionally, participates actively in the response to hyperosmotic and heat shock by preventing the aggregation of stress-denatured proteins and by disaggregating proteins, also in an autonomous, DnaK-independent fashion. Unfolded proteins bind initially to DnaJ; upon interaction with the DnaJ-bound protein, DnaK hydrolyzes its bound ATP, resulting in the formation of a stable complex. GrpE releases ADP from DnaK; ATP binding to DnaK triggers the release of the substrate protein, thus completing the reaction cycle. Several rounds of ATP-dependent interactions between DnaJ, DnaK and GrpE are required for fully efficient folding. Also involved, together with DnaK and GrpE, in the DNA replication of plasmids through activation of initiation proteins. This Wolbachia pipientis subsp. Culex pipiens (strain wPip) protein is Chaperone protein DnaJ.